The chain runs to 160 residues: Large ribosomal subunit protein bL9 (160 aa).

Belongs to the bacterial ribosomal protein bL9 family.

Its function is as follows. Binds to the 23S rRNA. In Neorickettsia sennetsu (strain ATCC VR-367 / Miyayama) (Ehrlichia sennetsu), this protein is Large ribosomal subunit protein bL9.